A 276-amino-acid polypeptide reads, in one-letter code: NADPH-dependent 7-cyano-7-deazaguanine reductase (276 aa).

Residue isoleucine 83–serine 85 participates in substrate binding. An NADPH-binding site is contributed by serine 85 to lysine 86. Cysteine 184 (thioimide intermediate) is an active-site residue. Aspartate 191 serves as the catalytic Proton donor. Histidine 223–glutamate 224 lines the substrate pocket. Arginine 252–glycine 253 provides a ligand contact to NADPH.

The protein belongs to the GTP cyclohydrolase I family. QueF type 2 subfamily. As to quaternary structure, homodimer.

The protein localises to the cytoplasm. The catalysed reaction is 7-aminomethyl-7-carbaguanine + 2 NADP(+) = 7-cyano-7-deazaguanine + 2 NADPH + 3 H(+). Its pathway is tRNA modification; tRNA-queuosine biosynthesis. Catalyzes the NADPH-dependent reduction of 7-cyano-7-deazaguanine (preQ0) to 7-aminomethyl-7-deazaguanine (preQ1). This chain is NADPH-dependent 7-cyano-7-deazaguanine reductase, found in Ectopseudomonas mendocina (strain ymp) (Pseudomonas mendocina).